A 178-amino-acid polypeptide reads, in one-letter code: Bifunctional protein PyrR (178 aa).

The short motif at 99-111 (IIIIDDVLYTCRT) is the PRPP-binding element.

This sequence belongs to the purine/pyrimidine phosphoribosyltransferase family. PyrR subfamily. Homodimer and homohexamer; in equilibrium.

The catalysed reaction is UMP + diphosphate = 5-phospho-alpha-D-ribose 1-diphosphate + uracil. In terms of biological role, regulates transcriptional attenuation of the pyrimidine nucleotide (pyr) operon by binding in a uridine-dependent manner to specific sites on pyr mRNA. This disrupts an antiterminator hairpin in the RNA and favors formation of a downstream transcription terminator, leading to a reduced expression of downstream genes. Also displays a weak uracil phosphoribosyltransferase activity which is not physiologically significant. This is Bifunctional protein PyrR from Clostridium beijerinckii (strain ATCC 51743 / NCIMB 8052) (Clostridium acetobutylicum).